The chain runs to 194 residues: PPE family protein PPE41 (194 aa).

Belongs to the mycobacterial PPE family. Forms a heterodimer with PE25. The dimer forms a 1:1:1 heterotrimeric complex with EspG5. PPE41 interacts directly with EspG5.

The protein localises to the secreted. It localises to the cell surface. The PE25/PPE41 dimer induces both a strong humoral and cellular immune response. The dimer induces necrosis, but not apoptosis, in mouse macrophage cells. It also induces activation and maturation of mouse dendritic cells and drives Th2-biased immune responses. In Mycobacterium tuberculosis (strain ATCC 25618 / H37Rv), this protein is PPE family protein PPE41.